Here is a 310-residue protein sequence, read N- to C-terminus: Porphobilinogen deaminase (310 aa).

Position 242 is an S-(dipyrrolylmethanemethyl)cysteine (C242).

Belongs to the HMBS family. Monomer. Dipyrromethane serves as cofactor.

It carries out the reaction 4 porphobilinogen + H2O = hydroxymethylbilane + 4 NH4(+). It participates in porphyrin-containing compound metabolism; protoporphyrin-IX biosynthesis; coproporphyrinogen-III from 5-aminolevulinate: step 2/4. Functionally, tetrapolymerization of the monopyrrole PBG into the hydroxymethylbilane pre-uroporphyrinogen in several discrete steps. This Shewanella baltica (strain OS195) protein is Porphobilinogen deaminase.